The following is a 429-amino-acid chain: Adenylosuccinate synthetase (429 aa).

GTP contacts are provided by residues 12-18 and 40-42; these read GDEGKGK and GHT. Asp13 serves as the catalytic Proton acceptor. 2 residues coordinate Mg(2+): Asp13 and Gly40. IMP-binding positions include 13-16, 38-41, Thr128, Arg142, Gln223, Thr238, and Arg302; these read DEGK and NAGH. His41 functions as the Proton donor in the catalytic mechanism. 298 to 304 contacts substrate; sequence TTTGRPR. GTP-binding positions include Arg304, 330-332, and 412-414; these read SID and SVG.

It belongs to the adenylosuccinate synthetase family. In terms of assembly, homodimer. Mg(2+) serves as cofactor.

It is found in the cytoplasm. The enzyme catalyses IMP + L-aspartate + GTP = N(6)-(1,2-dicarboxyethyl)-AMP + GDP + phosphate + 2 H(+). It functions in the pathway purine metabolism; AMP biosynthesis via de novo pathway; AMP from IMP: step 1/2. In terms of biological role, plays an important role in the de novo pathway of purine nucleotide biosynthesis. Catalyzes the first committed step in the biosynthesis of AMP from IMP. The protein is Adenylosuccinate synthetase of Bacillus cytotoxicus (strain DSM 22905 / CIP 110041 / 391-98 / NVH 391-98).